A 216-amino-acid chain; its full sequence is Small ribosomal subunit protein uS5 (216 aa).

The tract at residues 1 to 55 (MDRKLENQKDLLNQDPKVELNSQSVAKNPLNSREVKPIQRRRPLRKNSRDKNSKP) is disordered. Polar residues predominate over residues 20-31 (LNSQSVAKNPLN). Residues 57-120 (FEERVIAIHR…KDAQNRLVSV (64 aa)) enclose the S5 DRBM domain.

It belongs to the universal ribosomal protein uS5 family. Part of the 30S ribosomal subunit. Contacts proteins S4 and S8.

With S4 and S12 plays an important role in translational accuracy. Functionally, located at the back of the 30S subunit body where it stabilizes the conformation of the head with respect to the body. The polypeptide is Small ribosomal subunit protein uS5 (Mesomycoplasma hyopneumoniae (strain J / ATCC 25934 / NCTC 10110) (Mycoplasma hyopneumoniae)).